The chain runs to 377 residues: Nitric oxide reductase FlRd-NAD(+) reductase (377 aa).

The protein belongs to the FAD-dependent oxidoreductase family. It depends on FAD as a cofactor.

Its subcellular location is the cytoplasm. The catalysed reaction is 2 reduced [nitric oxide reductase rubredoxin domain] + NAD(+) + H(+) = 2 oxidized [nitric oxide reductase rubredoxin domain] + NADH. It functions in the pathway nitrogen metabolism; nitric oxide reduction. One of at least two accessory proteins for anaerobic nitric oxide (NO) reductase. Reduces the rubredoxin moiety of NO reductase. The protein is Nitric oxide reductase FlRd-NAD(+) reductase of Shigella dysenteriae serotype 1 (strain Sd197).